A 492-amino-acid chain; its full sequence is N-succinylglutamate 5-semialdehyde dehydrogenase (492 aa).

220-225 (GSAGTG) is a binding site for NAD(+). Catalysis depends on residues Glu243 and Cys277.

The protein belongs to the aldehyde dehydrogenase family. AstD subfamily.

The enzyme catalyses N-succinyl-L-glutamate 5-semialdehyde + NAD(+) + H2O = N-succinyl-L-glutamate + NADH + 2 H(+). The protein operates within amino-acid degradation; L-arginine degradation via AST pathway; L-glutamate and succinate from L-arginine: step 4/5. Catalyzes the NAD-dependent reduction of succinylglutamate semialdehyde into succinylglutamate. The chain is N-succinylglutamate 5-semialdehyde dehydrogenase from Cronobacter sakazakii (strain ATCC BAA-894) (Enterobacter sakazakii).